The following is a 394-amino-acid chain: MRAIISVALFLSLSLLSAVNAAEILSAGDTDDVIPDSYIVVMRDGLSTDAFNSHTTQISGFRNEDRNVKASLKKTFDLNGLKGYSGTFDEATIRQIANDPAVKYIEHDRIANARGLVEQQDAGWNLARISHKKTGARTYVYDKSAGAGISVCLVDTGVDVDNPDLGGRATWGANFVDNDDSDGNGHGTFLASLIAGQKHGVAKKAKIIAVKVLDANGSGSYSNVISGIDWCVKYAKEHGISERMVVNLSLGGGYSQAVNQAAENAVLAGMFVSAAVGGSNRDARNDSPASARGVCAIAASTMDDKAALFSNYGSIVAVYAPGQNIMAAGRMGSVTLSGTSFAAGHASGVGAYLLALEKITGDRVCTRIKELAIPVIRNSPSNTTRLLLYNGSGR.

Positions 1-21 (MRAIISVALFLSLSLLSAVNA) are cleaved as a signal peptide. Positions 22–114 (AEILSAGDTD…IEHDRIANAR (93 aa)) are excised as a propeptide. The Inhibitor I9 domain occupies 37-110 (SYIVVMRDGL…AVKYIEHDRI (74 aa)). The 272-residue stretch at 123-394 (GWNLARISHK…RLLLYNGSGR (272 aa)) folds into the Peptidase S8 domain. Active-site charge relay system residues include D155 and H186. N-linked (GlcNAc...) asparagine glycans are attached at residues N216 and N247. The active-site Charge relay system is the S340. N-linked (GlcNAc...) asparagine glycosylation is found at N382 and N390.

This sequence belongs to the peptidase S8 family.

It is found in the secreted. In terms of biological role, secreted subtilisin-like serine protease with keratinolytic activity that contributes to pathogenicity. In Coccidioides posadasii (strain C735) (Valley fever fungus), this protein is Subtilisin-like protease CPC735_005570.